Consider the following 143-residue polypeptide: Large ribosomal subunit protein uL16c (143 aa).

This sequence belongs to the universal ribosomal protein uL16 family. Part of the 50S ribosomal subunit.

It localises to the plastid. The protein resides in the chloroplast. This is Large ribosomal subunit protein uL16c from Cyanidioschyzon merolae (strain NIES-3377 / 10D) (Unicellular red alga).